Consider the following 483-residue polypeptide: Isocitrate dehydrogenase [NADP] (483 aa).

Thr-74 is a binding site for NADP(+). Residues Ser-83, Asn-85, Arg-89, Arg-99, and Arg-121 each coordinate D-threo-isocitrate. Asp-232 is a Mg(2+) binding site. NADP(+) is bound by residues 264 to 270 and Asn-277; that span reads HGSAPDI.

Belongs to the isocitrate and isopropylmalate dehydrogenases family. As to quaternary structure, homodimer. Mg(2+) serves as cofactor. Mn(2+) is required as a cofactor.

It carries out the reaction D-threo-isocitrate + NADP(+) = 2-oxoglutarate + CO2 + NADPH. Functionally, catalyzes the oxidative decarboxylation of isocitrate to 2-oxoglutarate and carbon dioxide with the concomitant reduction of NADP(+). The polypeptide is Isocitrate dehydrogenase [NADP] (icd) (Rickettsia conorii (strain ATCC VR-613 / Malish 7)).